Consider the following 218-residue polypeptide: THAP domain-containing protein 3 (218 aa).

The segment at 1–82 (MPKSCAARQC…LKHNAVPTVF (82 aa)) adopts a THAP-type zinc-finger fold. Disordered stretches follow at residues 97–120 (GGDS…PEGP) and 133–154 (ATEA…PGQP). The residue at position 100 (S100) is a Phosphoserine. The HCFC1-binding motif (HBM) signature appears at 156–159 (DHSY).

In terms of assembly, component of a THAP1/THAP3-HCFC1-OGT complex that contains at least, either THAP1 or THAP3, HCFC1 and OGT. Interacts directly with OGT and HCFC1 (via its HBM). Highest levels in heart, liver and kidney. Lower levels in brain and lung.

Functionally, component of a THAP1/THAP3-HCFC1-OGT complex that is required for the regulation of the transcriptional activity of RRM1. This Mus musculus (Mouse) protein is THAP domain-containing protein 3 (Thap3).